A 293-amino-acid chain; its full sequence is MALRLDGKALAKAVESRLQAQIESNLPQAGRPPGLAVLRVGDDPASAVYVANKEKACARIGVASYGAHLPSSTPFAEVLSTIQQLNADPRVDGILLQLPLPEGLDEGPLLMAIDPEKDADGLHTLNLGRLLKGEQGPRSCTPAGVMAMLRSQGIDPAGQRAVVIGRSILVGQPMALMLQAANATVTVVHSRTKDLVAHTREADIVVVAAGRPGMVGAEHIKPGAAVVDVGIHRKPEGGLCGDVRAAEVEPIAAALSPVPGGVGPMTVTMLLVNTVVAWCRRHGVDHDLADLLS.

NADP(+) is bound by residues 165-167 (GRS), Ser-190, and Ile-231.

This sequence belongs to the tetrahydrofolate dehydrogenase/cyclohydrolase family. Homodimer.

The enzyme catalyses (6R)-5,10-methylene-5,6,7,8-tetrahydrofolate + NADP(+) = (6R)-5,10-methenyltetrahydrofolate + NADPH. It catalyses the reaction (6R)-5,10-methenyltetrahydrofolate + H2O = (6R)-10-formyltetrahydrofolate + H(+). Its pathway is one-carbon metabolism; tetrahydrofolate interconversion. Its function is as follows. Catalyzes the oxidation of 5,10-methylenetetrahydrofolate to 5,10-methenyltetrahydrofolate and then the hydrolysis of 5,10-methenyltetrahydrofolate to 10-formyltetrahydrofolate. This Synechococcus sp. (strain CC9902) protein is Bifunctional protein FolD.